An 800-amino-acid polypeptide reads, in one-letter code: Phenylalanine--tRNA ligase beta subunit (800 aa).

The tRNA-binding domain maps to 38-147 (GAELKGVVAA…PGTVPGTPIG (110 aa)). Residues 401–477 (VASPEVRMRW…RTLGYDAIPE (77 aa)) enclose the B5 domain. Asp455, Asp461, Glu464, and Glu465 together coordinate Mg(2+). Residues 708–799 (PRLPAVLRDV…LRERVGAELR (92 aa)) enclose the FDX-ACB domain.

The protein belongs to the phenylalanyl-tRNA synthetase beta subunit family. Type 1 subfamily. As to quaternary structure, tetramer of two alpha and two beta subunits. Requires Mg(2+) as cofactor.

The protein resides in the cytoplasm. The enzyme catalyses tRNA(Phe) + L-phenylalanine + ATP = L-phenylalanyl-tRNA(Phe) + AMP + diphosphate + H(+). The protein is Phenylalanine--tRNA ligase beta subunit of Anaeromyxobacter dehalogenans (strain 2CP-C).